Consider the following 452-residue polypeptide: 3-phosphoshikimate 1-carboxyvinyltransferase (452 aa).

The segment covering Met1 to Ala17 has biased composition (low complexity). The tract at residues Met1–Gly26 is disordered. Residues Lys28, Ser29, and Arg33 each contribute to the 3-phosphoshikimate site. Residue Lys28 coordinates phosphoenolpyruvate. 2 residues coordinate phosphoenolpyruvate: Gly100 and Arg128. 3-phosphoshikimate contacts are provided by Ser174, Gln176, Asp327, and Lys354. Gln176 serves as a coordination point for phosphoenolpyruvate. Catalysis depends on Asp327, which acts as the Proton acceptor. Phosphoenolpyruvate-binding residues include Arg358 and Arg409.

It belongs to the EPSP synthase family. As to quaternary structure, monomer.

It localises to the cytoplasm. The catalysed reaction is 3-phosphoshikimate + phosphoenolpyruvate = 5-O-(1-carboxyvinyl)-3-phosphoshikimate + phosphate. The protein operates within metabolic intermediate biosynthesis; chorismate biosynthesis; chorismate from D-erythrose 4-phosphate and phosphoenolpyruvate: step 6/7. Its function is as follows. Catalyzes the transfer of the enolpyruvyl moiety of phosphoenolpyruvate (PEP) to the 5-hydroxyl of shikimate-3-phosphate (S3P) to produce enolpyruvyl shikimate-3-phosphate and inorganic phosphate. In Mesorhizobium japonicum (strain LMG 29417 / CECT 9101 / MAFF 303099) (Mesorhizobium loti (strain MAFF 303099)), this protein is 3-phosphoshikimate 1-carboxyvinyltransferase.